The primary structure comprises 461 residues: MEENNDKLATNSYVNLFINRHEHAPTYSIITHGCQMNEHDSEKIKTLLENMGFEKSDEKLDADFIIFNTCLVRENAEMKVYGQLGALKNLKRENPDMLIAVCGCMMQTGPARDIIREKYPQVDIVFGVNNINSLPYLIDRHLSSGKLVVDIERKDDIDEDITIKRDNEYVGYVNIMTGCNNFCTYCIVPYARGREQSRSVESILSEVKRMVDQGYKDITLLGQNVNSYGKTLENPVTFTELLTKVNDVEGLERLRFLTSHPKDISDELIEAMGKLDKVCENIHLPFQAGSNSVLERMHRRYTKESYLEKVEKLKKSVKGITFSTDIIVGFPGETEEDFQDTLDVVRKVGYEQAFTFKYNRRPGTKADLFEDQVDEDVKQDRLERLLDVAYPIFYEKNKSYLGTIQEVLIEGESKNNPEVMTGRTRTFKLVNVKCDKSYIGKLVNTKIVDFNSFALTGEMVD.

The MTTase N-terminal domain occupies 25-143; that stretch reads PTYSIITHGC…LPYLIDRHLS (119 aa). 6 residues coordinate [4Fe-4S] cluster: Cys-34, Cys-70, Cys-104, Cys-179, Cys-183, and Cys-186. In terms of domain architecture, Radical SAM core spans 165 to 395; it reads RDNEYVGYVN…LDVAYPIFYE (231 aa). Positions 398–461 constitute a TRAM domain; that stretch reads KSYLGTIQEV…SFALTGEMVD (64 aa).

Belongs to the methylthiotransferase family. MiaB subfamily. As to quaternary structure, monomer. The cofactor is [4Fe-4S] cluster.

The protein localises to the cytoplasm. The catalysed reaction is N(6)-dimethylallyladenosine(37) in tRNA + (sulfur carrier)-SH + AH2 + 2 S-adenosyl-L-methionine = 2-methylsulfanyl-N(6)-dimethylallyladenosine(37) in tRNA + (sulfur carrier)-H + 5'-deoxyadenosine + L-methionine + A + S-adenosyl-L-homocysteine + 2 H(+). Functionally, catalyzes the methylthiolation of N6-(dimethylallyl)adenosine (i(6)A), leading to the formation of 2-methylthio-N6-(dimethylallyl)adenosine (ms(2)i(6)A) at position 37 in tRNAs that read codons beginning with uridine. This is tRNA-2-methylthio-N(6)-dimethylallyladenosine synthase from Finegoldia magna (strain ATCC 29328 / DSM 20472 / WAL 2508) (Peptostreptococcus magnus).